A 302-amino-acid chain; its full sequence is Putative gluconeogenesis factor (302 aa).

Belongs to the gluconeogenesis factor family.

It localises to the cytoplasm. Required for morphogenesis under gluconeogenic growth conditions. The protein is Putative gluconeogenesis factor (ybhK) of Salmonella typhimurium (strain LT2 / SGSC1412 / ATCC 700720).